Reading from the N-terminus, the 647-residue chain is DNA mismatch repair protein MutL (647 aa).

The disordered stretch occupies residues V393–Y423. Basic and acidic residues predominate over residues R409–Y423.

It belongs to the DNA mismatch repair MutL/HexB family.

This protein is involved in the repair of mismatches in DNA. It is required for dam-dependent methyl-directed DNA mismatch repair. May act as a 'molecular matchmaker', a protein that promotes the formation of a stable complex between two or more DNA-binding proteins in an ATP-dependent manner without itself being part of a final effector complex. This Streptococcus thermophilus (strain CNRZ 1066) protein is DNA mismatch repair protein MutL.